A 350-amino-acid polypeptide reads, in one-letter code: Protein CONSERVED ONLY IN THE GREEN LINEAGE 160, chloroplastic (350 aa).

The N-terminal 46 residues, 1-46, are a transit peptide targeting the chloroplast; the sequence is MAILSYISATSTTPPIPQDQSPNSRLPTKIILPNKKPEKWSTGVAP. Positions 7-26 are enriched in polar residues; sequence ISATSTTPPIPQDQSPNSRL. The segment at 7-58 is disordered; sequence ISATSTTPPIPQDQSPNSRLPTKIILPNKKPEKWSTGVAPGEYGGPPTTTKL. Ser-117 bears the Phosphoserine mark. Helical transmembrane passes span 213 to 233, 239 to 259, 276 to 296, and 304 to 324; these read KNKIQVLTLGIGGVGLVSAYI, IALSFGAGLLGSLAYMRMLGN, ANQPRLLVPVVLVMIFNRWNA, and FMHLELIPMLVGFFTYKIATF.

The protein resides in the plastid. The protein localises to the chloroplast thylakoid membrane. Functionally, facilitates the assembly of the membrane proton channel of the chloroplastic F-type ATPase. Specifically required for the efficient assembly and integration of the CF(0) subunit c into the chloroplastic ATPase complex in the thylakoid membrane. In Arabidopsis thaliana (Mouse-ear cress), this protein is Protein CONSERVED ONLY IN THE GREEN LINEAGE 160, chloroplastic.